Reading from the N-terminus, the 202-residue chain is Protein-methionine-sulfoxide reductase heme-binding subunit MsrQ (202 aa).

Transmembrane regions (helical) follow at residues 8-28, 42-62, 75-95, 110-130, 147-167, and 169-189; these read LAVF…AWIF, LGLG…LQKL, LGLW…VFIL, PYII…ITSN, LVYL…RADL, and EWTL…PSIA.

The protein belongs to the MsrQ family. Heterodimer of a catalytic subunit (MsrP) and a heme-binding subunit (MsrQ). The cofactor is FMN. Heme b serves as cofactor.

It localises to the cell inner membrane. Part of the MsrPQ system that repairs oxidized periplasmic proteins containing methionine sulfoxide residues (Met-O), using respiratory chain electrons. Thus protects these proteins from oxidative-stress damage caused by reactive species of oxygen and chlorine generated by the host defense mechanisms. MsrPQ is essential for the maintenance of envelope integrity under bleach stress, rescuing a wide series of structurally unrelated periplasmic proteins from methionine oxidation. MsrQ provides electrons for reduction to the reductase catalytic subunit MsrP, using the quinone pool of the respiratory chain. The chain is Protein-methionine-sulfoxide reductase heme-binding subunit MsrQ from Pseudomonas aeruginosa (strain UCBPP-PA14).